Reading from the N-terminus, the 1031-residue chain is Toll-like receptor 9 (1031 aa).

The first 25 residues, 1-25, serve as a signal peptide directing secretion; the sequence is MGPCHGALQPLSLLVQAAMLAVALA. The Extracellular portion of the chain corresponds to 26 to 817; sequence QGTLPPFLPC…LCLDESLSWD (792 aa). Cys35 and Cys45 are joined by a disulfide. 47 to 51 is a DNA binding site; it reads WLFLK. LRR repeat units lie at residues 62–85, 87–110, 122–147, 150–166, 167–190, 198–221, 223–242, 243–268, 283–306, 308–332, 333–356, 363–386, 390–413, 414–438, 470–494, 496–519, 520–543, 545–567, 574–598, 600–622, 627–650, 652–675, 676–699, 701–723, 724–747, and 749–772; these read RDNV…DFAQ, SNLQ…HFPC, VPTL…SLVS, LSRT…LTGL, HALR…ALEV, LGNL…LPPS, EYLL…DLAN, LTAL…CVEC, LSRL…WFRG, GNLT…AFQG, LAQL…HLTL, LLSL…TLQP, LPML…IFKD, FPGL…ATTG, CKNL…MFAQ, SRLQ…QFVP, LTSL…SFTE, PRLE…VGHN, LPTL…LCST, LWAL…LYLR, LRSL…TLGN, PKSL…SLTL, LPNL…SLPS, TQLQ…FFAL, ATRL…WFGF, and AGSL…AFVD. Residue Asn64 is glycosylated (N-linked (GlcNAc...) asparagine). Residues 72-77 and 95-109 each bind DNA; these read SNRIHH and KWNC…MHFP. Cys98 and Cys110 are joined by a disulfide. Asn129 carries an N-linked (GlcNAc...) asparagine glycan. Residues Tyr132, Arg152, and 179–181 each bind DNA; that span reads YYK. Cys178 and Cys184 are disulfide-bonded. A glycan (N-linked (GlcNAc...) asparagine) is linked at Asn200. Tyr208 lines the DNA pocket. Asn210 and Asn242 each carry an N-linked (GlcNAc...) asparagine glycan. Intrachain disulfides connect Cys255/Cys268 and Cys258/Cys265. Cys258 carries the S-palmitoyl cysteine lipid modification. Arg262 contacts DNA. Cys265 carries S-palmitoyl cysteine lipidation. N-linked (GlcNAc...) asparagine glycans are attached at residues Asn309 and Asn340. The cysteines at positions 470 and 500 are disulfide-linked. Residues Asn472 and Asn513 are each glycosylated (N-linked (GlcNAc...) asparagine). A glycan (N-linked (GlcNAc...) asparagine) is linked at Asn567. 2 N-linked (GlcNAc...) asparagine glycosylation sites follow: Asn669 and Asn694. Asn731 carries N-linked (GlcNAc...) asparagine glycosylation. Intrachain disulfides connect Cys764/Cys790 and Cys766/Cys809. The chain crosses the membrane as a helical span at residues 818-838; sequence CFGLSLLVVALGLAMPMLHHL. Topologically, residues 839-1031 are cytoplasmic; that stretch reads CGWDLWYCFH…NFCRGPTMAE (193 aa). The 146-residue stretch at 866–1011 folds into the TIR domain; the sequence is LSYDAFVVFD…SFWAQLGMAL (146 aa).

It belongs to the Toll-like receptor family. In terms of assembly, monomer and homodimer. Exists as a monomer in the absence of unmethylated cytidine-phosphate-guanosine (CpG) ligand. Proteolytic processing of an insertion loop (Z-loop) is required for homodimerization upon binding to the unmethylated CpG ligand leading to its activation. Interacts with MYD88 via their respective TIR domains. Interacts with BTK. Interacts (via transmembrane domain) with UNC93B1. Interacts with CD300LH; the interaction may promote full activation of TLR9-triggered innate responses. Interacts with CNPY3 and HSP90B1; this interaction is required for proper folding in the endoplasmic reticulum. Interacts with SMPDL3B. Interacts with CD82; this interaction is essential for TLR9-dependent myddosome formation in response to CpG stimulation. In terms of processing, activated by proteolytic cleavage of the flexible loop between repeats LRR14 and LRR15 within the ectodomain. Cleavage requires UNC93B1. Proteolytically processed by first removing the majority of the ectodomain by either asparagine endopeptidase (AEP) or a cathepsin followed by a trimming event that is solely cathepsin mediated and required for optimal receptor signaling. Post-translationally, palmitoylated by ZDHHC3 in the Golgi regulates TLR9 trafficking from the Golgi to endosomes. Depalmitoylation by PPT1 controls the release of TLR9 from UNC93B1 in endosomes. As to expression, expressed in airway epithelium, vascular endothelium and inflammatory cells in blood vessels of the lungs (at protein level). Highly expressed in pulmonary intravascular macrophages (PIMs) and to a lesser extent in alveolar macrophages, neutrophiles, type-II alveolar epithelial cells and bronchial epithelial cells of the lungs (at protein level). High constitutive intracellular expression in leukocytes including polymorphonuclear leukocytes (PMNs), CD4 and CD8 T cells (at protein level). Expressed throughout the respiratory tract including larynx, upper, middle and lower trachea, and bronchus in isolated equine respiratory epithelial cells (ERECs) and in fully differentiated ERECs cultured at the air-fluid interface (AFI) (at protein level). Constitutively expressed in peripheral blood mononuclear cells (PBMCs), lymph nodes and spleen. The level of expression in PBMCs is about 2- to 3-fold higher than that in lymph nodes and spleen. Very low expression in liver, heart, lung, kidney, small intestine, colon and stomach. Low expression in the airway tissue epithelium of the larynx, upper trachea, middle tranchea, lower trachea, bronchus and spleen, and more abundant expression in mesenteric lymph node. Not expressed in fully differentiated bronchus epithelial cells cultured at the AFI for four weeks. Expressed in gingival tissue.

The protein resides in the endoplasmic reticulum membrane. It is found in the endosome. The protein localises to the lysosome. It localises to the cytoplasmic vesicle. Its subcellular location is the phagosome. The protein resides in the cell membrane. It is found in the cytoplasm. The protein localises to the nucleus. Key component of innate and adaptive immunity. TLRs (Toll-like receptors) control host immune response against pathogens through recognition of molecular patterns specific to microorganisms. TLR9 is a nucleotide-sensing TLR which is activated by unmethylated cytidine-phosphate-guanosine (CpG) dinucleotides. Acts via MYD88 and TRAF6, leading to NF-kappa-B activation, cytokine secretion and the inflammatory response. Upon CpG stimulation, induces B-cell proliferation, activation, survival and antibody production. The chain is Toll-like receptor 9 from Equus caballus (Horse).